The following is a 318-amino-acid chain: Pantothenate kinase (318 aa).

96–103 (GSVAVGKS) serves as a coordination point for ATP.

The protein belongs to the prokaryotic pantothenate kinase family.

Its subcellular location is the cytoplasm. It carries out the reaction (R)-pantothenate + ATP = (R)-4'-phosphopantothenate + ADP + H(+). It functions in the pathway cofactor biosynthesis; coenzyme A biosynthesis; CoA from (R)-pantothenate: step 1/5. In Rhodopseudomonas palustris (strain BisB5), this protein is Pantothenate kinase.